The chain runs to 97 residues: Small integral membrane protein 8 (97 aa).

Residues M1–G24 are disordered. The segment covering T9 to F20 has biased composition (basic and acidic residues). A helical membrane pass occupies residues P48–I70.

The protein belongs to the SMIM8 family.

It is found in the membrane. In Homo sapiens (Human), this protein is Small integral membrane protein 8 (SMIM8).